Consider the following 436-residue polypeptide: GTPase Der (436 aa).

EngA-type G domains follow at residues 4–167 (PTVA…PVEE) and 175–351 (IRFS…ESQN). Residues 10–17 (GRPNVGKS), 57–61 (DTGGI), 119–122 (NKVD), 181–188 (GRPNVGKS), 229–233 (DTAGM), and 294–297 (NKWD) each bind GTP. One can recognise a KH-like domain in the interval 352-436 (KRIPSAVLND…PIHLIARKRK (85 aa)).

It belongs to the TRAFAC class TrmE-Era-EngA-EngB-Septin-like GTPase superfamily. EngA (Der) GTPase family. As to quaternary structure, associates with the 50S ribosomal subunit.

GTPase that plays an essential role in the late steps of ribosome biogenesis. The sequence is that of GTPase Der from Streptococcus pyogenes serotype M28 (strain MGAS6180).